The primary structure comprises 294 residues: Acetylglutamate kinase (294 aa).

Residues 69-70 (GG), Arg-91, and Asn-190 each bind substrate.

This sequence belongs to the acetylglutamate kinase family. ArgB subfamily.

The protein resides in the cytoplasm. It catalyses the reaction N-acetyl-L-glutamate + ATP = N-acetyl-L-glutamyl 5-phosphate + ADP. Its pathway is amino-acid biosynthesis; L-arginine biosynthesis; N(2)-acetyl-L-ornithine from L-glutamate: step 2/4. Functionally, catalyzes the ATP-dependent phosphorylation of N-acetyl-L-glutamate. In Mycobacterium tuberculosis (strain CDC 1551 / Oshkosh), this protein is Acetylglutamate kinase.